We begin with the raw amino-acid sequence, 140 residues long: UPF0654 protein C22G7.11c (140 aa).

2 disordered regions span residues 1–88 (MPDP…DPMK) and 110–140 (YKAT…ETQA). Basic and acidic residues predominate over residues 24–33 (AKERAEDYIE). Polar residues predominate over residues 34–44 (SHSSGQETGDY). Positions 54 to 71 (DYEDLGDYDEDADFDNEE) are enriched in acidic residues.

It belongs to the UPF0654 (con-6) family.

The polypeptide is UPF0654 protein C22G7.11c (Schizosaccharomyces pombe (strain 972 / ATCC 24843) (Fission yeast)).